The sequence spans 358 residues: Phospho-N-acetylmuramoyl-pentapeptide-transferase (358 aa).

10 consecutive transmembrane segments (helical) span residues 25–45, 73–93, 97–117, 134–154, 172–192, 197–217, 233–253, 261–281, 286–306, and 335–355; these read RTIYAVITALVVSFILGPWVI, TMGGILILASIVIPTLLWADL, YVWTTLFVILGYGLIGFTDDY, MFWQMLIAGGAVCFLVLVAGM, YLYIPFGMLVVVGASNAVNLT, GLAIGPVAINAATFLLFAYIA, GAGELAVLCGAMVGAGIGFLW, VFMGDVGSLSLGGGLGILAVI, MLLVIVGGIFVVEALSVIFQV, and KIIVRFWIITIILALVAISTL.

This sequence belongs to the glycosyltransferase 4 family. MraY subfamily. Requires Mg(2+) as cofactor.

It localises to the cell inner membrane. The catalysed reaction is UDP-N-acetyl-alpha-D-muramoyl-L-alanyl-gamma-D-glutamyl-meso-2,6-diaminopimeloyl-D-alanyl-D-alanine + di-trans,octa-cis-undecaprenyl phosphate = di-trans,octa-cis-undecaprenyl diphospho-N-acetyl-alpha-D-muramoyl-L-alanyl-D-glutamyl-meso-2,6-diaminopimeloyl-D-alanyl-D-alanine + UMP. The protein operates within cell wall biogenesis; peptidoglycan biosynthesis. Functionally, catalyzes the initial step of the lipid cycle reactions in the biosynthesis of the cell wall peptidoglycan: transfers peptidoglycan precursor phospho-MurNAc-pentapeptide from UDP-MurNAc-pentapeptide onto the lipid carrier undecaprenyl phosphate, yielding undecaprenyl-pyrophosphoryl-MurNAc-pentapeptide, known as lipid I. The protein is Phospho-N-acetylmuramoyl-pentapeptide-transferase of Geobacter sulfurreducens (strain ATCC 51573 / DSM 12127 / PCA).